We begin with the raw amino-acid sequence, 882 residues long: Alanine--tRNA ligase (882 aa).

Residues histidine 571, histidine 575, cysteine 673, and histidine 677 each coordinate Zn(2+).

It belongs to the class-II aminoacyl-tRNA synthetase family. It depends on Zn(2+) as a cofactor.

The protein resides in the cytoplasm. It catalyses the reaction tRNA(Ala) + L-alanine + ATP = L-alanyl-tRNA(Ala) + AMP + diphosphate. Catalyzes the attachment of alanine to tRNA(Ala) in a two-step reaction: alanine is first activated by ATP to form Ala-AMP and then transferred to the acceptor end of tRNA(Ala). Also edits incorrectly charged Ser-tRNA(Ala) and Gly-tRNA(Ala) via its editing domain. The protein is Alanine--tRNA ligase of Desulfotalea psychrophila (strain LSv54 / DSM 12343).